The chain runs to 432 residues: Tubulin-specific chaperone cofactor E-like protein (432 aa).

7 LRR repeats span residues 69–94, 95–117, 118–140, 143–167, 168–191, 193–217, and 218–242; these read ASHVSEADLGWNQISKWSDIACILKN, LPHLRVLNIGHNPLNPVIDHELP, VSTLHTIILNGTHLPFKTLQSFL, LPKVTELHMSDNQFNDDDDCDEPIS, TTVRTVHLNRCGFLKWSSVMNVVK, FPNVCSVFVCENPLKDVTHCKHFEQ, and LPFWNFLNLAKTSIDSWDSLDQLNR. Residues 254–295 form an LRRCT region; sequence IPLLDALTNEERLHLIIGRLHHLRVLNGSKISSEQREQSERF. The segment at 324–415 is ubiquitin-like (UBL); the sequence is VTIDLTPKKE…GDSFLVQEKI (92 aa).

It localises to the cytoplasm. Its subcellular location is the cytoskeleton. Acts as a regulator of tubulin stability. Involved in microtubule-dependent neuronal function. May be involved in tubulin acetylation/deacetylation pathway. The sequence is that of Tubulin-specific chaperone cofactor E-like protein from Caenorhabditis elegans.